Reading from the N-terminus, the 124-residue chain is uncharacterized protein (124 aa).

Disordered regions lie at residues 1 to 26 (MRRQ…QPRP) and 100 to 124 (IPGQ…GLRR). Residues 102-115 (GQQSRNCSLPQTKY) are compositionally biased toward polar residues.

The protein localises to the cytoplasm. It is found in the cytoskeleton. Its subcellular location is the cilium basal body. This is an uncharacterized protein from Rattus norvegicus (Rat).